Reading from the N-terminus, the 124-residue chain is Small ribosomal subunit protein uS12 (124 aa).

Asp89 is subject to 3-methylthioaspartic acid.

Belongs to the universal ribosomal protein uS12 family. As to quaternary structure, part of the 30S ribosomal subunit. Contacts proteins S8 and S17. May interact with IF1 in the 30S initiation complex.

With S4 and S5 plays an important role in translational accuracy. Its function is as follows. Interacts with and stabilizes bases of the 16S rRNA that are involved in tRNA selection in the A site and with the mRNA backbone. Located at the interface of the 30S and 50S subunits, it traverses the body of the 30S subunit contacting proteins on the other side and probably holding the rRNA structure together. The combined cluster of proteins S8, S12 and S17 appears to hold together the shoulder and platform of the 30S subunit. This chain is Small ribosomal subunit protein uS12, found in Buchnera aphidicola subsp. Cinara cedri (strain Cc).